Reading from the N-terminus, the 529-residue chain is uncharacterized protein (529 aa).

This sequence to M.jannaschii MJ1451.

This is an uncharacterized protein from Methanothermobacter thermautotrophicus (strain ATCC 29096 / DSM 1053 / JCM 10044 / NBRC 100330 / Delta H) (Methanobacterium thermoautotrophicum).